The following is a 173-amino-acid chain: Ribosome maturation factor RimM (173 aa).

The PRC barrel domain occupies 96–169 (PDEYYDHQLE…LVEIDPPEGL (74 aa)).

Belongs to the RimM family. In terms of assembly, binds ribosomal protein uS19.

It is found in the cytoplasm. Its function is as follows. An accessory protein needed during the final step in the assembly of 30S ribosomal subunit, possibly for assembly of the head region. Essential for efficient processing of 16S rRNA. May be needed both before and after RbfA during the maturation of 16S rRNA. It has affinity for free ribosomal 30S subunits but not for 70S ribosomes. This chain is Ribosome maturation factor RimM, found in Mycobacterium sp. (strain JLS).